The primary structure comprises 420 residues: Ribosome biogenesis protein WDR12 homolog (420 aa).

Residues 10–92 (VQVHLKTKQE…EDAIEIEYVE (83 aa)) form a ubiquitin-like (UBL) domain region. WD repeat units follow at residues 104 to 142 (LHDD…LTIS), 143 to 185 (GHTA…NSVE), 192 to 231 (GHER…AAEG), 250 to 288 (GHRE…IKTE), 290 to 329 (STNK…GSVV), 335 to 375 (GHNA…APLY), and 379 to 417 (GHGE…AEDT).

It belongs to the WD repeat WDR12/YTM1 family.

Its subcellular location is the nucleus. The protein localises to the nucleolus. The protein resides in the nucleoplasm. Required for maturation of ribosomal RNAs and formation of the large ribosomal subunit. In Drosophila erecta (Fruit fly), this protein is Ribosome biogenesis protein WDR12 homolog.